The following is a 94-amino-acid chain: Acylphosphatase (94 aa).

One can recognise an Acylphosphatase-like domain in the interval 8-94 (RFTARVVGRV…QGDLADFRRK (87 aa)). Residues Arg23 and Asn41 contribute to the active site.

The protein belongs to the acylphosphatase family.

The enzyme catalyses an acyl phosphate + H2O = a carboxylate + phosphate + H(+). The chain is Acylphosphatase (acyP) from Frankia alni (strain DSM 45986 / CECT 9034 / ACN14a).